The following is a 253-amino-acid chain: 3-deoxy-manno-octulosonate cytidylyltransferase (253 aa).

This sequence belongs to the KdsB family.

The protein resides in the cytoplasm. It catalyses the reaction 3-deoxy-alpha-D-manno-oct-2-ulosonate + CTP = CMP-3-deoxy-beta-D-manno-octulosonate + diphosphate. It participates in nucleotide-sugar biosynthesis; CMP-3-deoxy-D-manno-octulosonate biosynthesis; CMP-3-deoxy-D-manno-octulosonate from 3-deoxy-D-manno-octulosonate and CTP: step 1/1. It functions in the pathway bacterial outer membrane biogenesis; lipopolysaccharide biosynthesis. In terms of biological role, activates KDO (a required 8-carbon sugar) for incorporation into bacterial lipopolysaccharide in Gram-negative bacteria. The sequence is that of 3-deoxy-manno-octulosonate cytidylyltransferase from Neisseria meningitidis serogroup C / serotype 2a (strain ATCC 700532 / DSM 15464 / FAM18).